Reading from the N-terminus, the 429-residue chain is MSFYRSWIGGEGELVRRYTSSIRDDAEIVEEVVKIMEAHVRHLAEVGAAPKEAAEAVAKALREVEPERLLTSEFEDVHEALEKWLVDRLGEEVAGWIGLGRSRNDHVAAAIRLAALRKTGVLKKAVERMRCVLAKRALEYADCAMPSFTHFQPAQAITFGHYLLAVDELAGEFLHVLKPVEELLKRSPLGAGPAGGARAPIDRERVAKLAGFEGVVENALYASGSRFFALALASAVVSFLVELSRAVDDFIRWNSPLVGYVAAPDSHVSTSSIMPHKRNLVTLEVFRARAAEALGHLAALHAVVMKIGMGYSLDLQEATRHLWAVLNIASEGVEVFTDFLEKMSFDCGRARRDAERYYSTSSDTAEEAALRGVPFRRAYFQLAREIREGAARLLPVDEALRRPTRGSANPEEVKRAASARLVFCREKPL.

This sequence belongs to the lyase 1 family. Argininosuccinate lyase subfamily.

The protein resides in the cytoplasm. The enzyme catalyses 2-(N(omega)-L-arginino)succinate = fumarate + L-arginine. It participates in amino-acid biosynthesis; L-arginine biosynthesis; L-arginine from L-ornithine and carbamoyl phosphate: step 3/3. In Pyrobaculum neutrophilum (strain DSM 2338 / JCM 9278 / NBRC 100436 / V24Sta) (Thermoproteus neutrophilus), this protein is Argininosuccinate lyase.